We begin with the raw amino-acid sequence, 273 residues long: uncharacterized protein (273 aa).

The signal sequence occupies residues 1-21 (MKILRWLFALVMLIATTEAMA).

This sequence to S.typhimurium YadU.

Functionally, part of the yfcOPQRSUV fimbrial operon. Could contribute to adhesion to various surfaces in specific environmental niches. Increases adhesion to eukaryotic T24 bladder epithelial cells in the absence of fim genes. This is an uncharacterized protein from Escherichia coli (strain K12).